The primary structure comprises 289 residues: Digeranylgeranylglyceryl phosphate synthase (289 aa).

8 consecutive transmembrane segments (helical) span residues Cys-17–Ser-37, Leu-50–Ile-70, Phe-106–Phe-126, Thr-141–Ala-161, Val-163–Ile-183, Leu-221–Leu-241, Tyr-243–Ala-263, and Lys-269–Val-289.

Belongs to the UbiA prenyltransferase family. DGGGP synthase subfamily. The cofactor is Mg(2+).

It localises to the cell membrane. The catalysed reaction is sn-3-O-(geranylgeranyl)glycerol 1-phosphate + (2E,6E,10E)-geranylgeranyl diphosphate = 2,3-bis-O-(geranylgeranyl)-sn-glycerol 1-phosphate + diphosphate. It functions in the pathway membrane lipid metabolism; glycerophospholipid metabolism. In terms of biological role, prenyltransferase that catalyzes the transfer of the geranylgeranyl moiety of geranylgeranyl diphosphate (GGPP) to the C2 hydroxyl of (S)-3-O-geranylgeranylglyceryl phosphate (GGGP). This reaction is the second ether-bond-formation step in the biosynthesis of archaeal membrane lipids. In Methanosarcina barkeri (strain Fusaro / DSM 804), this protein is Digeranylgeranylglyceryl phosphate synthase.